A 780-amino-acid polypeptide reads, in one-letter code: Catenin beta-1 (780 aa).

The segment at G34–D56 is disordered. 10 ARM repeats span residues N140 to K179, R224 to L263, E266 to Y305, S350 to D389, G399 to N430, Y431 to S472, E478 to L518, P520 to E561, I583 to Q622, and K624 to E663. The segment covering E735–G744 has biased composition (basic and acidic residues). Residues E735–S770 form a disordered region.

This sequence belongs to the beta-catenin family. As to quaternary structure, interacts with adnpa. Interacts with cdh1 during oogenesis and in the unfertilized egg. Interacts with ctnna1 and cdh2. In terms of processing, phosphorylation by gsk3b promotes ubiquitination and subsequent degradation by the proteasome. Ubiquitinated when phosphorylated by gsk3b, leading to its degradation. In terms of tissue distribution, expressed in the successional lamina, also expressed in both the epithelial and mesenchymal cells of the developing replacement tooth (at protein level). Expressed in the enamel organ as well as in the inner and outer dental epithelium during replacement tooth morphogenesis (at protein level). Expressed in the differentiated, polarized odontoblasts that line the dentine matrix as well as in the inner and outer dental epithelium during tooth cytodifferentiation (at protein level). Expressed in the reduced enamel organ, odontoblasts and weakly at the center of the dental papilla of the functional tooth as well as in the epithelial crypts surrounding the functional tooth (at protein level). Expressed in the liver (at protein level). Expressed at intercalated disks in the heart (at protein level). Expressed in the ovary.

It is found in the cytoplasm. Its subcellular location is the nucleus. The protein resides in the cell membrane. The protein localises to the cell junction. It localises to the adherens junction. Its function is as follows. Key downstream component of the canonical Wnt signaling pathway. In the absence of Wnt, forms a complex with axin1, axin2, apc, csnk1a1 and gsk3b that promotes phosphorylation on N-terminal Ser and Thr residues and ubiquitination of ctnnb1 and its subsequent degradation by the proteasome. In the presence of Wnt ligand, ctnnb1 is not ubiquitinated and accumulates in the nucleus, where it acts as a coactivator for transcription factors of the TCF/LEF family, leading to activate Wnt responsive genes. Plays a key role in dorsoventral patterning: in prospective ventral blastomeres, its down-regulation by axin1 and axin2 leads to inhibit the Wnt signaling pathway, while in prospective dorsal blastomeres, degradation of axin results in stabilization and nuclear translocation of ctnnb1. This Danio rerio (Zebrafish) protein is Catenin beta-1.